Reading from the N-terminus, the 236-residue chain is Phosphoribosylaminoimidazole-succinocarboxamide synthase (236 aa).

Belongs to the SAICAR synthetase family.

It carries out the reaction 5-amino-1-(5-phospho-D-ribosyl)imidazole-4-carboxylate + L-aspartate + ATP = (2S)-2-[5-amino-1-(5-phospho-beta-D-ribosyl)imidazole-4-carboxamido]succinate + ADP + phosphate + 2 H(+). It participates in purine metabolism; IMP biosynthesis via de novo pathway; 5-amino-1-(5-phospho-D-ribosyl)imidazole-4-carboxamide from 5-amino-1-(5-phospho-D-ribosyl)imidazole-4-carboxylate: step 1/2. The sequence is that of Phosphoribosylaminoimidazole-succinocarboxamide synthase from Pseudomonas syringae pv. syringae (strain B728a).